The following is a 680-amino-acid chain: DNA-directed RNA polymerase subunit beta' (680 aa).

4 residues coordinate Zn(2+): Cys-69, Cys-71, Cys-87, and Cys-90. Mg(2+) contacts are provided by Asp-489, Asp-491, and Asp-493.

Belongs to the RNA polymerase beta' chain family. RpoC1 subfamily. In plastids the minimal PEP RNA polymerase catalytic core is composed of four subunits: alpha, beta, beta', and beta''. When a (nuclear-encoded) sigma factor is associated with the core the holoenzyme is formed, which can initiate transcription. Mg(2+) serves as cofactor. The cofactor is Zn(2+).

The protein localises to the plastid. It localises to the chloroplast. It catalyses the reaction RNA(n) + a ribonucleoside 5'-triphosphate = RNA(n+1) + diphosphate. In terms of biological role, DNA-dependent RNA polymerase catalyzes the transcription of DNA into RNA using the four ribonucleoside triphosphates as substrates. This is DNA-directed RNA polymerase subunit beta' from Lepidium virginicum (Virginia pepperweed).